Reading from the N-terminus, the 308-residue chain is Extended-spectrum beta-lactamase PER-1 (308 aa).

The N-terminal stretch at 1–26 is a signal peptide; it reads MNVIIKAVVTASTLLMVSFSSFETSA. S71 acts as the Nucleophile; acyl-ester intermediate in catalysis. K74, S135, and E171 together coordinate a beta-lactam.

Belongs to the class-A beta-lactamase family. In terms of assembly, monomer.

Its subcellular location is the secreted. It carries out the reaction a beta-lactam + H2O = a substituted beta-amino acid. Inhibited by the beta-lactamase-blocking agents clavulanic acid, tazobactam and sulbactam. Not inhibited by EDTA. Extended-spectrum beta-lactamase (ESBL) which confers resistance to penicillins, as well as first-, second- and third-generation cephalosporins, but not the carbapenem, imipenem, in the JM109 strain of E.coli. Has cefotaxime-hydrolyzing activity. This chain is Extended-spectrum beta-lactamase PER-1, found in Pseudomonas aeruginosa.